The following is a 206-amino-acid chain: Testis-expressed protein 38 (206 aa).

The helical transmembrane segment at 15 to 35 (VSLYFGILGLCSVITGGCIIF) threads the bilayer.

Its subcellular location is the membrane. This is Testis-expressed protein 38 (TEX38) from Homo sapiens (Human).